Consider the following 377-residue polypeptide: Probable transposase for insertion sequence element IS5377 (377 aa).

It belongs to the transposase 11 family.

The polypeptide is Probable transposase for insertion sequence element IS5377 (Geobacillus stearothermophilus (Bacillus stearothermophilus)).